The primary structure comprises 266 residues: MPIATPYEDLLRRVLETGTAKSDRTGTGTRSLFGQQIRYDLGCGFPLLTTKKVHFKSVVYELLWFLRGDSNVGWLQQHGVTIWDEWASETGDLGPIYGVQWRSWPTPSGEHIDQISAALELLRTDPDSRRIIVSAWNVGQIPQMALPPCHAFFQFYVADGRLSCQLYQRSADLFLGVPFNIASYALLTHMMAAQAGLSVGEFIWTGGDCHIYDNHVEQVTEQLRREPRPYPKLSLSQRDSIFDYTYEDVVVQDYDPHPAIKAPVAV.

Residue Arg-24 coordinates dUMP. His-54 lines the (6R)-5,10-methylene-5,6,7,8-tetrahydrofolate pocket. A dUMP-binding site is contributed by 129 to 130; that stretch reads RR. The active-site Nucleophile is the Cys-149. DUMP contacts are provided by residues 169-172, Asn-180, and 210-212; these read RSAD and HIY. (6R)-5,10-methylene-5,6,7,8-tetrahydrofolate is bound at residue Asp-172. Ala-265 is a binding site for (6R)-5,10-methylene-5,6,7,8-tetrahydrofolate.

This sequence belongs to the thymidylate synthase family. Bacterial-type ThyA subfamily. As to quaternary structure, homodimer.

The protein localises to the cytoplasm. The catalysed reaction is dUMP + (6R)-5,10-methylene-5,6,7,8-tetrahydrofolate = 7,8-dihydrofolate + dTMP. It participates in pyrimidine metabolism; dTTP biosynthesis. Catalyzes the reductive methylation of 2'-deoxyuridine-5'-monophosphate (dUMP) to 2'-deoxythymidine-5'-monophosphate (dTMP) while utilizing 5,10-methylenetetrahydrofolate (mTHF) as the methyl donor and reductant in the reaction, yielding dihydrofolate (DHF) as a by-product. This enzymatic reaction provides an intracellular de novo source of dTMP, an essential precursor for DNA biosynthesis. In Mycobacterium ulcerans (strain Agy99), this protein is Thymidylate synthase.